The chain runs to 198 residues: NAD(P)H dehydrogenase (quinone) (198 aa).

The region spanning 4-189 (ILVLYYSMYG…SIARYQGEYV (186 aa)) is the Flavodoxin-like domain. Residues 10-15 (SMYGHI) and 78-80 (TRF) contribute to the FMN site. Tyrosine 12 is an NAD(+) binding site. Tryptophan 98 lines the substrate pocket. FMN-binding positions include 113-118 (STGTGG) and histidine 133.

The protein belongs to the WrbA family. It depends on FMN as a cofactor.

The catalysed reaction is a quinone + NADH + H(+) = a quinol + NAD(+). It carries out the reaction a quinone + NADPH + H(+) = a quinol + NADP(+). This Salmonella paratyphi A (strain ATCC 9150 / SARB42) protein is NAD(P)H dehydrogenase (quinone).